Consider the following 129-residue polypeptide: Calcitonin gene-related peptide 2 (129 aa).

The N-terminal stretch at 1–25 (MGFGKPSSFLAFSILVLCQAGSLQA) is a signal peptide. A propeptide spanning residues 26–81 (QPLRSSLESLPDPAALSEKEGRLLLAALVKAYVQRKTNELEQEQEQEMEGSSLTAQ) is cleaved from the precursor. A disulfide bridge links Cys85 with Cys90. Position 120 is a phenylalanine amide (Phe120). The propeptide occupies 126 to 129 (DLQA).

It belongs to the calcitonin family.

It localises to the secreted. Its function is as follows. CALCB/CGRP2 is a peptide hormone that induces vasodilation mediated by the CALCRL-RAMP1 receptor complex. Dilates a variety of vessels including the coronary, cerebral and systemic vasculature. Its abundance in the CNS also points toward a neurotransmitter or neuromodulator role. This Equus caballus (Horse) protein is Calcitonin gene-related peptide 2 (CALCB).